We begin with the raw amino-acid sequence, 389 residues long: 26S proteasome non-ATPase regulatory subunit 6 (389 aa).

The PCI domain occupies 193-361 (DFKQAAELFL…EIVETNRPDS (169 aa)).

Belongs to the proteasome subunit S10 family. In terms of assembly, component of the 19S proteasome regulatory particle complex. The 26S proteasome consists of a 20S core particle (CP) and two 19S regulatory subunits (RP). The regulatory particle is made of a lid composed of 9 subunits including PSMD6, a base containing 6 ATPases and few additional components.

In terms of biological role, component of the 26S proteasome, a multiprotein complex involved in the ATP-dependent degradation of ubiquitinated proteins. This complex plays a key role in the maintenance of protein homeostasis by removing misfolded or damaged proteins, which could impair cellular functions, and by removing proteins whose functions are no longer required. Therefore, the proteasome participates in numerous cellular processes, including cell cycle progression, apoptosis, or DNA damage repair. The sequence is that of 26S proteasome non-ATPase regulatory subunit 6 (PSMD6) from Homo sapiens (Human).